The primary structure comprises 422 residues: NADP-dependent malic enzyme (422 aa).

The active-site Proton donor is the Tyr-39. The active-site Proton acceptor is the Lys-94. Substrate is bound at residue Lys-94. 3 residues coordinate a divalent metal cation: Glu-136, Asp-137, and Asp-162. NADP(+) is bound by residues 195 to 198 (AGAA), Asn-286, and Asn-318. Asn-318 provides a ligand contact to substrate.

It belongs to the malic enzymes family. The cofactor is Mg(2+). It depends on Mn(2+) as a cofactor.

It carries out the reaction (S)-malate + NADP(+) = pyruvate + CO2 + NADPH. The catalysed reaction is oxaloacetate + H(+) = pyruvate + CO2. This chain is NADP-dependent malic enzyme, found in Halomonas elongata (strain ATCC 33173 / DSM 2581 / NBRC 15536 / NCIMB 2198 / 1H9).